A 129-amino-acid chain; its full sequence is Virion-associated protein (129 aa).

2 coiled-coil regions span residues 1–31 and 38–59; these read MANL…ILEM and IKES…LIND. Positions 122–129 are capsid binding; it reads PAGWPNQF.

This sequence belongs to the caulimovirus ORF III family. Homotetramer, through coiled-coil domain. Homotrimer when interacts with icosehadral capsid. Interacts with capsid protein, and with Movement protein.

The protein resides in the virion. Its subcellular location is the host cell junction. The protein localises to the host plasmodesma. Its function is as follows. Plays a role in virus cell-to-cell and plant-to-plant transmission. Interacts with virion icosahedral capsid and movement protein, thereby facilitating virion cell-to-cell transmission through plasmodesmata opened by viral movement protein. Also interacts with aphid transmission factor, attaching the virion to aphid stylet when the animal feeds on an virus infected plant. Aphid saliva may later detach the virion, inducing release of infectious particles when the animal feeds on a new plant. The protein is Virion-associated protein of Arabidopsis thaliana (Mouse-ear cress).